We begin with the raw amino-acid sequence, 160 residues long: Large ribosomal subunit protein uL16 (160 aa).

A compositionally biased stretch (polar residues) spans Lys138–Thr148. The tract at residues Lys138–Gln160 is disordered. Positions Lys149–Gln160 are enriched in basic and acidic residues.

It belongs to the universal ribosomal protein uL16 family. In terms of assembly, part of the 50S ribosomal subunit.

In terms of biological role, binds 23S rRNA and is also seen to make contacts with the A and possibly P site tRNAs. The sequence is that of Large ribosomal subunit protein uL16 from Prochlorococcus marinus (strain MIT 9312).